The chain runs to 841 residues: Probable alpha-glucuronidase A (841 aa).

The first 20 residues, 1–20, serve as a signal peptide directing secretion; the sequence is MRGLNLFQLILALLLSMVAA. N-linked (GlcNAc...) asparagine glycosylation is found at N51, N76, N85, N149, N222, N279, N310, N343, N450, N465, N527, N576, N682, N723, and N732.

It belongs to the glycosyl hydrolase 67 family.

The protein localises to the secreted. It catalyses the reaction an alpha-D-glucuronoside + H2O = D-glucuronate + an alcohol. Functionally, alpha-glucuronidase involved in the hydrolysis of xylan, a major structural heterogeneous polysaccharide found in plant biomass representing the second most abundant polysaccharide in the biosphere, after cellulose. Releases 4-O-methylglucuronic acid from xylan. This Aspergillus niger protein is Probable alpha-glucuronidase A (aguA).